An 89-amino-acid chain; its full sequence is Small ribosomal subunit protein uS15 (89 aa).

This sequence belongs to the universal ribosomal protein uS15 family. Part of the 30S ribosomal subunit. Forms a bridge to the 50S subunit in the 70S ribosome, contacting the 23S rRNA.

One of the primary rRNA binding proteins, it binds directly to 16S rRNA where it helps nucleate assembly of the platform of the 30S subunit by binding and bridging several RNA helices of the 16S rRNA. In terms of biological role, forms an intersubunit bridge (bridge B4) with the 23S rRNA of the 50S subunit in the ribosome. This chain is Small ribosomal subunit protein uS15, found in Syntrophomonas wolfei subsp. wolfei (strain DSM 2245B / Goettingen).